The sequence spans 545 residues: Esterase-5B (545 aa).

Positions 1 to 19 are cleaved as a signal peptide; sequence MYCAKLILLLGCFWISSSA. A disulfide bridge links Cys84 with Cys103. N-linked (GlcNAc...) asparagine glycosylation occurs at Asn113. The active-site Acyl-ester intermediate is the Ser207. Cys259 and Cys271 form a disulfide bridge. Asn421 is a glycosylation site (N-linked (GlcNAc...) asparagine). His467 functions as the Charge relay system in the catalytic mechanism. N-linked (GlcNAc...) asparagine glycosylation is present at Asn507. Cys515 and Cys536 are oxidised to a cystine.

This sequence belongs to the type-B carboxylesterase/lipase family. As to quaternary structure, homodimer.

It localises to the secreted. It catalyses the reaction a carboxylic ester + H2O = an alcohol + a carboxylate + H(+). This chain is Esterase-5B (Est-5B), found in Drosophila persimilis (Fruit fly).